Consider the following 106-residue polypeptide: Large ribosomal subunit protein uL23 (106 aa).

It belongs to the universal ribosomal protein uL23 family. In terms of assembly, part of the 50S ribosomal subunit. Contacts protein L29, and trigger factor when it is bound to the ribosome.

Its function is as follows. One of the early assembly proteins it binds 23S rRNA. One of the proteins that surrounds the polypeptide exit tunnel on the outside of the ribosome. Forms the main docking site for trigger factor binding to the ribosome. In Acinetobacter baumannii (strain AB307-0294), this protein is Large ribosomal subunit protein uL23.